A 283-amino-acid chain; its full sequence is UPF0273 protein STK_18300 (283 aa).

The 246-residue stretch at 4–249 (LRVRTYIPGF…YLRITNVKAE (246 aa)) folds into the KaiC domain. 31 to 38 (GGPGTGKS) is an ATP binding site. Positions 261–283 (MKKAVEESEEEKESIQEAEIEEE) are disordered. Residues 267-283 (ESEEEKESIQEAEIEEE) show a composition bias toward acidic residues.

This sequence belongs to the UPF0273 family.

This is UPF0273 protein STK_18300 from Sulfurisphaera tokodaii (strain DSM 16993 / JCM 10545 / NBRC 100140 / 7) (Sulfolobus tokodaii).